A 316-amino-acid chain; its full sequence is Nod factor export ATP-binding protein I (316 aa).

The region spanning 18–248 is the ABC transporter domain; the sequence is IDFSDVSKTY…LIGCEVIEIY (231 aa). 50–57 is an ATP binding site; sequence GPNGAGKS.

It belongs to the ABC transporter superfamily. Lipooligosaccharide exporter (TC 3.A.1.102) family. As to quaternary structure, the complex is composed of two ATP-binding proteins (NodI) and two transmembrane proteins (NodJ).

The protein localises to the cell inner membrane. Its function is as follows. Part of the ABC transporter complex NodIJ involved in the export of the nodulation factors (Nod factors), the bacterial signal molecules that induce symbiosis and subsequent nodulation induction. Nod factors are LCO (lipo-chitin oligosaccharide), a modified beta-1,4-linked N-acetylglucosamine oligosaccharide. This subunit is responsible for energy coupling to the transport system. This is Nod factor export ATP-binding protein I from Rhizobium etli (strain ATCC 51251 / DSM 11541 / JCM 21823 / NBRC 15573 / CFN 42).